The primary structure comprises 135 residues: Transcriptional activator protein (135 aa).

A Nuclear localization signal motif is present at residues 17–32 (KIQHHIAKKRQVRRRR). The segment at 37–54 (CGCSYYIHLDCINHGFTH) is a zinc-finger region. The segment at 120 to 135 (HLDDLTVSDWSFFKSL) is transactivation.

It belongs to the geminiviridae transcriptional activator protein family. In terms of assembly, monomer. Homodimer. Homooligomer. Self-interaction correlates with nuclear localization and efficient activation of transcription. Monomers suppress local silencing by interacting with and inactivating host adenosine kinase 2 (ADK2) in the cytoplasm. Interacts with and inhibits host SNF1 kinase. Binds to ssDNA. May interact with host RPS27A. In terms of processing, phosphorylated.

Its subcellular location is the host nucleus. It localises to the host cytoplasm. In terms of biological role, multifunctional protein that modulates host antiviral defenses and promotes host attractiveness to insect vectors. Acts as a suppressor of RNA-mediated gene silencing, also known as post-transcriptional gene silencing (PTGS), a mechanism of plant viral defense that limits the accumulation of viral RNAs. TrAP suppresses the host RNA silencing by inhibiting adenosine kinase 2 (ADK2), a kinase involved in a general methylation pathway. Also suppresses the host basal defense by interacting with and inhibiting SNF1 kinase, a key regulator of cell metabolism implicated in innate antiviral defense. Its function is as follows. Inhibits signal transduction by the phytohormone jasmonate, making the infected plant more attractive to aphids, which are the second host to play a role as a dissemination vector. Acts by binding to ubiquitin precursor RPS27A, thereby preventing ubiquitin degradation of JAZ. This chain is Transcriptional activator protein, found in Capsicum annuum (Capsicum pepper).